Consider the following 696-residue polypeptide: DNA-directed RNA polymerase subunit beta' (696 aa).

4 residues coordinate Zn(2+): Cys-69, Cys-71, Cys-87, and Cys-90. Mg(2+) is bound by residues Asp-504, Asp-506, and Asp-508.

This sequence belongs to the RNA polymerase beta' chain family. RpoC1 subfamily. In plastids the minimal PEP RNA polymerase catalytic core is composed of four subunits: alpha, beta, beta', and beta''. When a (nuclear-encoded) sigma factor is associated with the core the holoenzyme is formed, which can initiate transcription. Requires Mg(2+) as cofactor. Zn(2+) is required as a cofactor.

It localises to the plastid. Its subcellular location is the chloroplast. It catalyses the reaction RNA(n) + a ribonucleoside 5'-triphosphate = RNA(n+1) + diphosphate. Functionally, DNA-dependent RNA polymerase catalyzes the transcription of DNA into RNA using the four ribonucleoside triphosphates as substrates. In Pinus koraiensis (Korean pine), this protein is DNA-directed RNA polymerase subunit beta'.